Here is a 31-residue protein sequence, read N- to C-terminus: Cytochrome b6-f complex subunit 6 (31 aa).

The chain crosses the membrane as a helical span at residues 4 to 24 (ITSYFGFLLAALTLTLALFIG).

This sequence belongs to the PetL family. The 4 large subunits of the cytochrome b6-f complex are cytochrome b6, subunit IV (17 kDa polypeptide, PetD), cytochrome f and the Rieske protein, while the 4 small subunits are PetG, PetL, PetM and PetN. The complex functions as a dimer.

It localises to the plastid. It is found in the chloroplast thylakoid membrane. Functionally, component of the cytochrome b6-f complex, which mediates electron transfer between photosystem II (PSII) and photosystem I (PSI), cyclic electron flow around PSI, and state transitions. PetL is important for photoautotrophic growth as well as for electron transfer efficiency and stability of the cytochrome b6-f complex. This is Cytochrome b6-f complex subunit 6 from Oryza sativa subsp. japonica (Rice).